Reading from the N-terminus, the 278-residue chain is Beta-lactamase-like protein str5 (278 aa).

Residues 20 to 37 traverse the membrane as a helical segment; that stretch reads VFVLAALLSATFAFFTHT. N-linked (GlcNAc...) asparagine glycosylation is present at Asn112.

This sequence belongs to the beta-lactamase family.

The protein localises to the membrane. The protein operates within mycotoxin biosynthesis. Its function is as follows. Beta-lactamase-like protein; part of the gene cluster that mediates the biosynthesis of strobilurin A, an antifungal polyketide that contains a key beta-methoxyacrylate toxophore that targets the complex III of the mitochondrial electron transport chain. Strobilurin biosynthesis begins with construction of benzoyl CoA by step-wise elimination of ammonia from phenylalanine by the phenylalanine ammonia-lyase str11, oxygenation by str8 and retro-Claisen reaction to form benzoic acid, which is activated to its CoA thiolester benzoyl CoA by the dedicated CoA ligase str10. Benzoyl CoA forms the starter unit for the highly reducing polyketide synthase stpks1 that produces the polyketide prestrobilutin A. The FAD-dependent oxygenase str9 then catalyzes the key oxidative rearrangement responsible for the creation of the beta-methoxyacrylate toxophore. Str9 performs epoxidation of the 2,3 olefin of prestrobilutin A, followed by Meinwald rearrangement to furnish the aldehyde intermediate. Rapid enolization of the aldehyde intermediate would give the beta-methoxyacrylate skeleton and methylations catalyzed by str2 and str3 complete the synthesis and lead to the production of strobilurin A. The short-chain dehydrogenase stl2 and the dehydrogenase str4 play a role in the shunt pathway leading to the production of bolineol. The cluster encodes no obvious halogenase gene that could be involved in production of strobilurin B, nor any obvious dimethylallyl-transferase that could be involved in the production of strobilurin G. It is possible that unknown proteins encoded in, or near, the cluster (such as str1 or stl1) may form new classes of halogenases or dimethylally-transferases, or that the responsible genes are located elsewhere on the genome. Similarly, proteins encoded by str5/str6 hydrolases appear to have no chemical role in the biosynthesis of strobilurin A. Finally, no obvious self-resistance gene is found within the cluster. The chain is Beta-lactamase-like protein str5 from Strobilurus tenacellus.